We begin with the raw amino-acid sequence, 250 residues long: Ribosomal RNA small subunit methyltransferase G (250 aa).

S-adenosyl-L-methionine-binding positions include G78, L83, 129 to 130 (AE), and R144. The segment at 224–250 (IAAPRKRGGQQRRAGHARGTSNRRRGT) is disordered. The segment covering 227–250 (PRKRGGQQRRAGHARGTSNRRRGT) has biased composition (basic residues).

The protein belongs to the methyltransferase superfamily. RNA methyltransferase RsmG family.

Its subcellular location is the cytoplasm. Its function is as follows. Specifically methylates the N7 position of guanine in position 518 of 16S rRNA. The protein is Ribosomal RNA small subunit methyltransferase G of Nocardioides sp. (strain ATCC BAA-499 / JS614).